We begin with the raw amino-acid sequence, 105 residues long: Small ribosomal subunit protein uS10 (105 aa).

Belongs to the universal ribosomal protein uS10 family. Part of the 30S ribosomal subunit.

Involved in the binding of tRNA to the ribosomes. This chain is Small ribosomal subunit protein uS10, found in Rickettsia canadensis (strain McKiel).